The primary structure comprises 301 residues: UDP-N-acetylenolpyruvoylglucosamine reductase (301 aa).

Residues 30–194 (VGGEADYLVF…LSVKFALAPG (165 aa)) enclose the FAD-binding PCMH-type domain. R173 is a catalytic residue. S223 functions as the Proton donor in the catalytic mechanism. The active site involves E293.

Belongs to the MurB family. FAD serves as cofactor.

It is found in the cytoplasm. It catalyses the reaction UDP-N-acetyl-alpha-D-muramate + NADP(+) = UDP-N-acetyl-3-O-(1-carboxyvinyl)-alpha-D-glucosamine + NADPH + H(+). Its pathway is cell wall biogenesis; peptidoglycan biosynthesis. Functionally, cell wall formation. The polypeptide is UDP-N-acetylenolpyruvoylglucosamine reductase (Streptococcus pneumoniae (strain JJA)).